Here is a 636-residue protein sequence, read N- to C-terminus: Amylosucrase (636 aa).

The substrate site is built by Asp152, His195, Gln262, and Arg292. Asp294 acts as the Nucleophile in catalysis. The Proton donor role is filled by Glu336. Substrate-binding residues include His400, Asp401, and Arg517.

It belongs to the glycosyl hydrolase 13 family. In terms of assembly, monomer.

It is found in the secreted. It catalyses the reaction [(1-&gt;4)-alpha-D-glucosyl](n) + sucrose = [(1-&gt;4)-alpha-D-glucosyl](n+1) + D-fructose. Amylosucrase favors hydrolysis at low sucrose concentrations, and polymerization at high sucrose concentrations. Competitively inhibited by fructose. Catalyzes the synthesis of alpha-glucan from sucrose. Catalyzes, in addition, sucrose hydrolysis, maltose and maltotriose synthesis by successive transfers of the glucosyl moiety of sucrose onto the released glucose, and finally turanose and trehalulose synthesis, these two sucrose isomers being obtained by glucosyl transfer onto fructose. The polypeptide is Amylosucrase (ams) (Neisseria polysaccharea).